Reading from the N-terminus, the 207-residue chain is Protein 6b (207 aa).

Residues 160 to 183 form a disordered region; the sequence is GNYTEEGEDDDDEMDDEGEAGGAE. Residues 164-178 are compositionally biased toward acidic residues; the sequence is EEGEDDDDEMDDEGE.

In terms of biological role, involved in tumor formation and increases auxin and cytokinin effects in host plants. In Agrobacterium tumefaciens (strain Ach5), this protein is Protein 6b (6b).